Consider the following 246-residue polypeptide: Nodulation protein G (246 aa).

8 to 32 (VTGAMGGLGTAICQALAKDGCIVAA) contributes to the NAD(+) binding site. A substrate-binding site is contributed by S140. Y153 serves as the catalytic Proton acceptor.

The protein belongs to the short-chain dehydrogenases/reductases (SDR) family.

In terms of biological role, proposed to modify Nod factor fatty acyl chain. The chain is Nodulation protein G (nodG) from Azospirillum brasilense.